The primary structure comprises 137 residues: Small ribosomal subunit protein uS9 (137 aa).

The disordered stretch occupies residues 103–137 (PPLKAEGYLTRDPRAKERKKYGLHKARKAPQYSKR). Basic residues predominate over residues 118 to 137 (KERKKYGLHKARKAPQYSKR).

This sequence belongs to the universal ribosomal protein uS9 family.

This is Small ribosomal subunit protein uS9 from Crocosphaera subtropica (strain ATCC 51142 / BH68) (Cyanothece sp. (strain ATCC 51142)).